A 542-amino-acid polypeptide reads, in one-letter code: GMP synthase [glutamine-hydrolyzing] (542 aa).

Positions 28–218 (MLVILDFGSQ…VYHICQCEPT (191 aa)) constitute a Glutamine amidotransferase type-1 domain. The Nucleophile role is filled by C105. Catalysis depends on residues H192 and E194. Residues 219–417 (WTTEAFVEES…IGLPEEIVRR (199 aa)) enclose the GMPS ATP-PPase domain. An ATP-binding site is contributed by 246 to 252 (SGGVDSS).

In terms of assembly, homodimer.

The catalysed reaction is XMP + L-glutamine + ATP + H2O = GMP + L-glutamate + AMP + diphosphate + 2 H(+). It participates in purine metabolism; GMP biosynthesis; GMP from XMP (L-Gln route): step 1/1. Its function is as follows. Catalyzes the synthesis of GMP from XMP. This Rippkaea orientalis (strain PCC 8801 / RF-1) (Cyanothece sp. (strain PCC 8801)) protein is GMP synthase [glutamine-hydrolyzing].